The primary structure comprises 174 residues: Dual-action ribosomal maturation protein DarP (174 aa).

The protein belongs to the DarP family.

The protein localises to the cytoplasm. Functionally, member of a network of 50S ribosomal subunit biogenesis factors which assembles along the 30S-50S interface, preventing incorrect 23S rRNA structures from forming. Promotes peptidyl transferase center (PTC) maturation. This chain is Dual-action ribosomal maturation protein DarP, found in Vibrio atlanticus (strain LGP32) (Vibrio splendidus (strain Mel32)).